The primary structure comprises 350 residues: Twinfilin-1 (350 aa).

The residue at position 2 (serine 2) is an N-acetylserine. Residues 2–139 (SHQTGIQASE…SLHGYKKYLL (138 aa)) form the ADF-H 1 domain. Residues serine 143 and serine 277 each carry the phosphoserine modification. The region spanning 175 to 313 (LQGVAFPISR…TADFLYEEVH (139 aa)) is the ADF-H 2 domain. Tyrosine 309 is modified (phosphotyrosine). Residues 316–350 (QHAHKQSFAKPKGPAGKRGIRRLIRGPAETEATTD) form a disordered region. Phosphothreonine is present on threonine 349.

It belongs to the actin-binding proteins ADF family. Twinfilin subfamily. In terms of assembly, interacts with G-actin; ADP-actin form and capping protein (CP). May also be able to interact with TWF2 and phosphoinositides, PI(4,5)P2. When bound to PI(4,5)P2, it is down-regulated. Interacts with ACTG1. Phosphorylated on serine and threonine residues. As to expression, expressed at high levels in the colon, testis, ovary, prostate and lung. Expressed at lower levels in the brain, bladder and heart. Not detected in liver.

The protein localises to the cytoplasm. Its subcellular location is the cytoskeleton. Its function is as follows. Actin-binding protein involved in motile and morphological processes. Inhibits actin polymerization, likely by sequestering G-actin. By capping the barbed ends of filaments, it also regulates motility. Seems to play an important role in clathrin-mediated endocytosis and distribution of endocytic organelles. The sequence is that of Twinfilin-1 (TWF1) from Homo sapiens (Human).